Reading from the N-terminus, the 136-residue chain is Large ribosomal subunit protein uL16c (136 aa).

The protein belongs to the universal ribosomal protein uL16 family. In terms of assembly, part of the 50S ribosomal subunit.

It is found in the plastid. The protein resides in the chloroplast. The polypeptide is Large ribosomal subunit protein uL16c (Buxus microphylla (Littleleaf boxwood)).